A 797-amino-acid polypeptide reads, in one-letter code: Outer membrane protein assembly factor BamA (797 aa).

An N-terminal signal peptide occupies residues 1–21 (MKLKQIASALMMLGISPLALA). 5 POTRA domains span residues 23-90 (FTIQ…VIER), 91-171 (PTIG…IDEG), 174-262 (AKIT…VHEG), 265-344 (FRWG…IEPG), and 347-421 (IYVN…LTER).

Belongs to the BamA family. Part of the Bam complex.

The protein resides in the cell outer membrane. In terms of biological role, part of the outer membrane protein assembly complex, which is involved in assembly and insertion of beta-barrel proteins into the outer membrane. The chain is Outer membrane protein assembly factor BamA from Neisseria meningitidis serogroup B (strain ATCC BAA-335 / MC58).